The sequence spans 287 residues: Large ribosomal subunit protein uL2 (287 aa).

A disordered region spans residues 221 to 287; sequence RGSVMNPCDH…SKRSRGGRDS (67 aa). A compositionally biased stretch (basic residues) spans 258–287; sequence KTRKRNKPSNRFVLRKRRRVSKRSRGGRDS.

Belongs to the universal ribosomal protein uL2 family. As to quaternary structure, part of the 50S ribosomal subunit. Forms a bridge to the 30S subunit in the 70S ribosome.

In terms of biological role, one of the primary rRNA binding proteins. Required for association of the 30S and 50S subunits to form the 70S ribosome, for tRNA binding and peptide bond formation. It has been suggested to have peptidyltransferase activity; this is somewhat controversial. Makes several contacts with the 16S rRNA in the 70S ribosome. The polypeptide is Large ribosomal subunit protein uL2 (Prochlorococcus marinus (strain MIT 9211)).